Here is a 307-residue protein sequence, read N- to C-terminus: Elongation factor Ts (307 aa).

An involved in Mg(2+) ion dislocation from EF-Tu region spans residues 80-83 (TDFV).

Belongs to the EF-Ts family.

The protein resides in the cytoplasm. Its function is as follows. Associates with the EF-Tu.GDP complex and induces the exchange of GDP to GTP. It remains bound to the aminoacyl-tRNA.EF-Tu.GTP complex up to the GTP hydrolysis stage on the ribosome. This Rhodopseudomonas palustris (strain BisA53) protein is Elongation factor Ts.